The chain runs to 136 residues: Putative nickel-responsive regulator (136 aa).

Residues H76, H87, H89, and C95 each coordinate Ni(2+).

Belongs to the transcriptional regulatory CopG/NikR family. Requires Ni(2+) as cofactor.

Transcriptional regulator. The protein is Putative nickel-responsive regulator of Desulfotalea psychrophila (strain LSv54 / DSM 12343).